A 207-amino-acid chain; its full sequence is MARYTGPKCKLSRREGTDLFLKSARRSLDSKCKLDSKPGQHGRTSGARTSDYGLQLREKQKLKRMYGVLEKQFRKYFAEAERRRGNTGETLIQLLESRLDNVVYRMGFGSTRAEARQLVSHRAIELNGHTADIASMLVKAGDVITVREGAKKQARIRESLDLAASIGIPQWVEVDSNKMTGTFKSPPDRADVARDVNESMVVELYSR.

The disordered stretch occupies residues 31-51 (KCKLDSKPGQHGRTSGARTSD). The 64-residue stretch at 97–160 (SRLDNVVYRM…KKQARIRESL (64 aa)) folds into the S4 RNA-binding domain.

It belongs to the universal ribosomal protein uS4 family. As to quaternary structure, part of the 30S ribosomal subunit. Contacts protein S5. The interaction surface between S4 and S5 is involved in control of translational fidelity.

One of the primary rRNA binding proteins, it binds directly to 16S rRNA where it nucleates assembly of the body of the 30S subunit. In terms of biological role, with S5 and S12 plays an important role in translational accuracy. In Bordetella avium (strain 197N), this protein is Small ribosomal subunit protein uS4.